The sequence spans 290 residues: D-tagatose-1,6-bisphosphate aldolase subunit KbaY (290 aa).

Asp82 serves as the catalytic Proton donor. Zn(2+) contacts are provided by His83 and His180. Gly181 is a dihydroxyacetone phosphate binding site. His208 contacts Zn(2+). Dihydroxyacetone phosphate-binding positions include 209-211 and 230-233; these read GAS and NVAT.

This sequence belongs to the class II fructose-bisphosphate aldolase family. TagBP aldolase KbaY subfamily. Homotetramer. Forms a complex with KbaZ. Zn(2+) is required as a cofactor.

It catalyses the reaction D-tagatofuranose 1,6-bisphosphate = D-glyceraldehyde 3-phosphate + dihydroxyacetone phosphate. The protein operates within carbohydrate metabolism; D-tagatose 6-phosphate degradation; D-glyceraldehyde 3-phosphate and glycerone phosphate from D-tagatose 6-phosphate: step 2/2. Functionally, catalytic subunit of the tagatose-1,6-bisphosphate aldolase KbaYZ, which catalyzes the reversible aldol condensation of dihydroxyacetone phosphate (DHAP or glycerone-phosphate) with glyceraldehyde 3-phosphate (G3P) to produce tagatose 1,6-bisphosphate (TBP). Requires KbaZ subunit for full activity and stability. The polypeptide is D-tagatose-1,6-bisphosphate aldolase subunit KbaY (Salmonella arizonae (strain ATCC BAA-731 / CDC346-86 / RSK2980)).